The primary structure comprises 260 residues: Ribonuclease HII (260 aa).

The region spanning 71-259 (ELVAGVDEVG…VHDAIVNKKN (189 aa)) is the RNase H type-2 domain. Residues D77, E78, and D169 each contribute to the a divalent metal cation site.

This sequence belongs to the RNase HII family. Requires Mn(2+) as cofactor. The cofactor is Mg(2+).

The protein localises to the cytoplasm. The catalysed reaction is Endonucleolytic cleavage to 5'-phosphomonoester.. Endonuclease that specifically degrades the RNA of RNA-DNA hybrids. The sequence is that of Ribonuclease HII from Leuconostoc citreum (strain KM20).